The sequence spans 278 residues: Gasdermin-like protein het-Q1 (278 aa).

It belongs to the gasdermin family. As to quaternary structure, homooligomer; forms a homooligomeric ring-shaped pore complex when inserted in the membrane. The precursor form is cleaved by het-Q2, generating the pore-forming protein (Gasdermin-like protein het-Q1, N-terminal).

The protein resides in the cell membrane. Its function is as follows. Gasdermin-like protein involved in heterokaryon incompatibility, a process that ensures that during spontaneous vegetative cell fusion, only compatible cells from the same colony survive (non-self-recognition). In P.anserina, the het-q locus exists as 2 incompatible alleles, het-Q1 (this entry) and het-Q2 (AC P0DW09). This form constitutes the precursor of the pore-forming protein: during the allorecognition process, it is cleaved by het-Q2, releasing the N-terminal moiety (Gasdermin-like protein het-Q1, N-terminal) that binds to membranes and forms pores, triggering cell death. Pore-forming protein that causes membrane permeabilization and cell death. Released upon cleavage and maturation by het-Q2 and binds to membrane inner leaflet lipids. Homooligomerizes within the membrane and forms pores of 10-15 nanometers (nm) of inner diameter, triggering cell death. The sequence is that of Gasdermin-like protein het-Q1 from Podospora anserina (strain S / ATCC MYA-4624 / DSM 980 / FGSC 10383) (Pleurage anserina).